A 154-amino-acid chain; its full sequence is D-aminoacyl-tRNA deacylase (154 aa).

A Gly-cisPro motif, important for rejection of L-amino acids motif is present at residues 142–143 (GP).

It belongs to the DTD family. Homodimer.

It is found in the cytoplasm. The catalysed reaction is glycyl-tRNA(Ala) + H2O = tRNA(Ala) + glycine + H(+). It carries out the reaction a D-aminoacyl-tRNA + H2O = a tRNA + a D-alpha-amino acid + H(+). Its function is as follows. An aminoacyl-tRNA editing enzyme that deacylates mischarged D-aminoacyl-tRNAs. Also deacylates mischarged glycyl-tRNA(Ala), protecting cells against glycine mischarging by AlaRS. Acts via tRNA-based rather than protein-based catalysis; rejects L-amino acids rather than detecting D-amino acids in the active site. By recycling D-aminoacyl-tRNA to D-amino acids and free tRNA molecules, this enzyme counteracts the toxicity associated with the formation of D-aminoacyl-tRNA entities in vivo and helps enforce protein L-homochirality. This chain is D-aminoacyl-tRNA deacylase (DTD1), found in Yarrowia lipolytica (strain CLIB 122 / E 150) (Yeast).